The sequence spans 300 residues: 33 kDa chaperonin (300 aa).

2 disulfides stabilise this stretch: Cys-235-Cys-237 and Cys-269-Cys-272.

The protein belongs to the HSP33 family. Post-translationally, under oxidizing conditions two disulfide bonds are formed involving the reactive cysteines. Under reducing conditions zinc is bound to the reactive cysteines and the protein is inactive.

Its subcellular location is the cytoplasm. Redox regulated molecular chaperone. Protects both thermally unfolding and oxidatively damaged proteins from irreversible aggregation. Plays an important role in the bacterial defense system toward oxidative stress. This is 33 kDa chaperonin from Pseudomonas savastanoi pv. phaseolicola (strain 1448A / Race 6) (Pseudomonas syringae pv. phaseolicola (strain 1448A / Race 6)).